Here is a 331-residue protein sequence, read N- to C-terminus: Glyceraldehyde-3-phosphate dehydrogenase (331 aa).

Residues arginine 12–isoleucine 13, aspartate 34, arginine 78, and threonine 120 each bind NAD(+). Residues serine 149 to threonine 151, threonine 180, threonine 209 to glycine 210, and arginine 232 each bind D-glyceraldehyde 3-phosphate. Catalysis depends on cysteine 150, which acts as the Nucleophile. NAD(+) is bound at residue asparagine 314.

The protein belongs to the glyceraldehyde-3-phosphate dehydrogenase family. In terms of assembly, homotetramer.

It localises to the cytoplasm. It catalyses the reaction D-glyceraldehyde 3-phosphate + phosphate + NAD(+) = (2R)-3-phospho-glyceroyl phosphate + NADH + H(+). The protein operates within carbohydrate degradation; glycolysis; pyruvate from D-glyceraldehyde 3-phosphate: step 1/5. Catalyzes the oxidative phosphorylation of glyceraldehyde 3-phosphate (G3P) to 1,3-bisphosphoglycerate (BPG) using the cofactor NAD. The first reaction step involves the formation of a hemiacetal intermediate between G3P and a cysteine residue, and this hemiacetal intermediate is then oxidized to a thioester, with concomitant reduction of NAD to NADH. The reduced NADH is then exchanged with the second NAD, and the thioester is attacked by a nucleophilic inorganic phosphate to produce BPG. The chain is Glyceraldehyde-3-phosphate dehydrogenase (gapA) from Escherichia fergusonii (strain ATCC 35469 / DSM 13698 / CCUG 18766 / IAM 14443 / JCM 21226 / LMG 7866 / NBRC 102419 / NCTC 12128 / CDC 0568-73).